A 567-amino-acid polypeptide reads, in one-letter code: Formate--tetrahydrofolate ligase (567 aa).

68 to 75 (TPLGEGKT) is a binding site for ATP.

The protein belongs to the formate--tetrahydrofolate ligase family.

The catalysed reaction is (6S)-5,6,7,8-tetrahydrofolate + formate + ATP = (6R)-10-formyltetrahydrofolate + ADP + phosphate. It functions in the pathway one-carbon metabolism; tetrahydrofolate interconversion. In Desulforamulus reducens (strain ATCC BAA-1160 / DSM 100696 / MI-1) (Desulfotomaculum reducens), this protein is Formate--tetrahydrofolate ligase.